Here is a 384-residue protein sequence, read N- to C-terminus: Heparin lyase I (384 aa).

The signal sequence occupies residues 1–21; that stretch reads MKKQILYLIVLQQLFLCSAYA. Q22 is modified (blocked amino end (Gln)). S39 carries O-linked (Man...) serine glycosylation.

Monomer. The N-terminus is blocked.

The protein resides in the periplasm. The catalysed reaction is Eliminative cleavage of polysaccharides containing (1-&gt;4)-linked D-glucuronate or L-iduronate residues and (1-&gt;4)-alpha-linked 2-sulfoamino-2-deoxy-6-sulfo-D-glucose residues to give oligosaccharides with terminal 4-deoxy-alpha-D-gluc-4-enuronosyl groups at their non-reducing ends.. Degrades heparin and heparan sulfate. Also implicated in the release of heparin-bound growth factors from the extracellular matrix. This Pedobacter heparinus (Flavobacterium heparinum) protein is Heparin lyase I.